The primary structure comprises 422 residues: Proline--tRNA ligase (422 aa).

This sequence belongs to the class-II aminoacyl-tRNA synthetase family. ProS type 2 subfamily. As to quaternary structure, homodimer.

The protein localises to the cytoplasm. The enzyme catalyses tRNA(Pro) + L-proline + ATP = L-prolyl-tRNA(Pro) + AMP + diphosphate. Functionally, catalyzes the attachment of proline to tRNA(Pro) in a two-step reaction: proline is first activated by ATP to form Pro-AMP and then transferred to the acceptor end of tRNA(Pro). The chain is Proline--tRNA ligase from Wolbachia pipientis wMel.